Reading from the N-terminus, the 253-residue chain is Phosphate import ATP-binding protein PstB (253 aa).

An ABC transporter domain is found at 7–248; sequence IKVRDLNLYY…PRDRRTEDYI (242 aa). 39-46 is a binding site for ATP; the sequence is GPSGCGKS.

It belongs to the ABC transporter superfamily. Phosphate importer (TC 3.A.1.7) family. As to quaternary structure, the complex is composed of two ATP-binding proteins (PstB), two transmembrane proteins (PstC and PstA) and a solute-binding protein (PstS).

It localises to the cell membrane. The catalysed reaction is phosphate(out) + ATP + H2O = ADP + 2 phosphate(in) + H(+). Part of the ABC transporter complex PstSACB involved in phosphate import. Responsible for energy coupling to the transport system. The polypeptide is Phosphate import ATP-binding protein PstB (Carboxydothermus hydrogenoformans (strain ATCC BAA-161 / DSM 6008 / Z-2901)).